Here is a 502-residue protein sequence, read N- to C-terminus: MVAIRPDEISTIIRQQIESYNQEVQVSNVGTVLQVGDGTARIYGLQQAMSGELLEFEDGTVGIALNLEEDNVGAVLMGDGFGIKEGGTVKATGKIAQVPVGDALVGRVVDALGRPIDGKGEILASETRLVESPAPGIVARKSVCEPMQTGITAIDAMIPVGRGQRELIIGDRKTGKTAIAIDTIINQKSEDVICVYVAIGQKASTVAQVIDTLTQRGAMDYTVVVAANANDPATLQYIAPYTGASIAEYFMYKGKATLVIYDDLTKQAQAYRQLSLLMRRPPGREAYPGDVFYLHSRLLERAAKLSDALGGGSMTALPIIETQAGDVSAYIPTNVISITDGQIFLSTDLFNAGFRPAINAGISVSRVGSAAQTKAMKKVAGKLKLELAQFDELEAFAQFASDLDAATQAQLARGQRLRQILKQPQNFPLSVWEQVAVVYAGLNGYLDDIATDKVIDFCAGLREYLKTSKPRYVEIVSTEKQLNDEAEGLLKDGINEYKQAFK.

170-177 contributes to the ATP binding site; that stretch reads GDRKTGKT.

Belongs to the ATPase alpha/beta chains family. In terms of assembly, F-type ATPases have 2 components, CF(1) - the catalytic core - and CF(0) - the membrane proton channel. CF(1) has five subunits: alpha(3), beta(3), gamma(1), delta(1), epsilon(1). CF(0) has four main subunits: a, b, b' and c.

It is found in the cellular thylakoid membrane. It carries out the reaction ATP + H2O + 4 H(+)(in) = ADP + phosphate + 5 H(+)(out). In terms of biological role, produces ATP from ADP in the presence of a proton gradient across the membrane. The alpha chain is a regulatory subunit. This Microcystis aeruginosa (strain NIES-843 / IAM M-2473) protein is ATP synthase subunit alpha.